Here is a 338-residue protein sequence, read N- to C-terminus: Glycerol-3-phosphate dehydrogenase [NAD(P)+] (338 aa).

Positions 14, 15, 35, and 109 each coordinate NADPH. Sn-glycerol 3-phosphate-binding residues include lysine 109, glycine 138, and threonine 140. An NADPH-binding site is contributed by alanine 142. 5 residues coordinate sn-glycerol 3-phosphate: lysine 194, aspartate 247, serine 257, arginine 258, and asparagine 259. Lysine 194 acts as the Proton acceptor in catalysis. Arginine 258 is a binding site for NADPH. Positions 282 and 284 each coordinate NADPH.

Belongs to the NAD-dependent glycerol-3-phosphate dehydrogenase family.

Its subcellular location is the cytoplasm. The catalysed reaction is sn-glycerol 3-phosphate + NAD(+) = dihydroxyacetone phosphate + NADH + H(+). It catalyses the reaction sn-glycerol 3-phosphate + NADP(+) = dihydroxyacetone phosphate + NADPH + H(+). The protein operates within membrane lipid metabolism; glycerophospholipid metabolism. Functionally, catalyzes the reduction of the glycolytic intermediate dihydroxyacetone phosphate (DHAP) to sn-glycerol 3-phosphate (G3P), the key precursor for phospholipid synthesis. The polypeptide is Glycerol-3-phosphate dehydrogenase [NAD(P)+] (Shewanella baltica (strain OS155 / ATCC BAA-1091)).